The primary structure comprises 496 residues: Galactose-1-phosphate uridylyltransferase (496 aa).

It belongs to the galactose-1-phosphate uridylyltransferase type 2 family.

The protein resides in the cytoplasm. It carries out the reaction alpha-D-galactose 1-phosphate + UDP-alpha-D-glucose = alpha-D-glucose 1-phosphate + UDP-alpha-D-galactose. It participates in carbohydrate metabolism; galactose metabolism. The chain is Galactose-1-phosphate uridylyltransferase from Staphylococcus saprophyticus subsp. saprophyticus (strain ATCC 15305 / DSM 20229 / NCIMB 8711 / NCTC 7292 / S-41).